Here is a 486-residue protein sequence, read N- to C-terminus: UDP-N-acetylmuramate--L-alanine ligase (486 aa).

129–135 lines the ATP pocket; sequence GTHGKTT.

The protein belongs to the MurCDEF family.

Its subcellular location is the cytoplasm. The catalysed reaction is UDP-N-acetyl-alpha-D-muramate + L-alanine + ATP = UDP-N-acetyl-alpha-D-muramoyl-L-alanine + ADP + phosphate + H(+). The protein operates within cell wall biogenesis; peptidoglycan biosynthesis. Its function is as follows. Cell wall formation. This Vibrio cholerae serotype O1 (strain ATCC 39541 / Classical Ogawa 395 / O395) protein is UDP-N-acetylmuramate--L-alanine ligase.